A 216-amino-acid chain; its full sequence is Soluble inorganic pyrophosphatase 5 (216 aa).

Residues 1–20 (MNGEEVKTSQPQKKLQNPTP) form a disordered region. Polar residues predominate over residues 8 to 20 (TSQPQKKLQNPTP). Substrate contacts are provided by Lys-66 and Arg-80. The active-site Proton donor is the Tyr-88. Position 92 (Tyr-92) interacts with substrate. Mg(2+) contacts are provided by Asp-102, Asp-107, and Asp-139. Tyr-176 lines the substrate pocket.

This sequence belongs to the PPase family. The cofactor is Mg(2+).

Its subcellular location is the cytoplasm. It catalyses the reaction diphosphate + H2O = 2 phosphate + H(+). The polypeptide is Soluble inorganic pyrophosphatase 5 (Arabidopsis thaliana (Mouse-ear cress)).